The sequence spans 339 residues: Phosphate acyltransferase (339 aa).

Belongs to the PlsX family. As to quaternary structure, homodimer. Probably interacts with PlsY.

It is found in the cytoplasm. The enzyme catalyses a fatty acyl-[ACP] + phosphate = an acyl phosphate + holo-[ACP]. Its pathway is lipid metabolism; phospholipid metabolism. Its function is as follows. Catalyzes the reversible formation of acyl-phosphate (acyl-PO(4)) from acyl-[acyl-carrier-protein] (acyl-ACP). This enzyme utilizes acyl-ACP as fatty acyl donor, but not acyl-CoA. The polypeptide is Phosphate acyltransferase (Pasteurella multocida (strain Pm70)).